A 266-amino-acid chain; its full sequence is Apolipoprotein A-I (266 aa).

Residues 1–18 (MKAVVLTLAVLFLTGSQA) form the signal peptide. A run of 2 repeats spans residues 67–88 (LKLLDNWDSLSSTVAKLREQIG) and 89–110 (PVTQEFWDNLEKETEVLRQEMN). A 10 X approximate tandem repeats region spans residues 67–266 (LKLLDNWDSL…DEATKKLNSQ (200 aa)). Residue Met109 is modified to Methionine sulfoxide. A 3; half-length repeat occupies 111–121 (KDLEEVKKKVQ). 5 tandem repeats follow at residues 122–143 (PYLDEFQSKWHEEVELYRQKVA), 144–165 (PLGAELREGARQKLQELQEKLS), 166–187 (PLGEELRDRARTHVDALRAQLA), 188–209 (PYSEQLRERLAARLQALKEGGG), and 210–231 (AALTEYHAKASEHLSALREKAK). One copy of the 9; half-length repeat lies at 232-242 (PALEDLRQGLL). Copy 10 of the repeat occupies 243 to 266 (PVLENFRDSLLAAVDEATKKLNSQ).

The protein belongs to the apolipoprotein A1/A4/E family. As to quaternary structure, homodimer. Interacts with APOA1BP and CLU. Component of a sperm activating protein complex (SPAP), consisting of APOA1, an immunoglobulin heavy chain, an immunoglobulin light chain and albumin. Interacts with NDRG1. Interacts with SCGB3A2. Interacts with NAXE and YJEFN3. Glycosylated. In terms of processing, palmitoylated. Post-translationally, phosphorylation sites are present in the extracellular medium.

It localises to the secreted. In terms of biological role, participates in the reverse transport of cholesterol from tissues to the liver for excretion by promoting cholesterol efflux from tissues and by acting as a cofactor for the lecithin cholesterol acyltransferase (LCAT). As part of the SPAP complex, activates spermatozoa motility. In Neomonachus schauinslandi (Hawaiian monk seal), this protein is Apolipoprotein A-I (APOA1).